Consider the following 221-residue polypeptide: Ktr system potassium uptake protein C (221 aa).

Positions 2–118 constitute an RCK N-terminal domain; sequence KKEFAVIGLG…LSKIGADHIV (117 aa). Residues Arg12, 32-34, 52-53, 74-76, 99-101, His105, and Glu121 each bind NAD(+); these read DID, DS, IGE, and KAQ. The RCK C-terminal domain occupies 135 to 219; it reads NNVLDYLELS…ISRFEKRVLH (85 aa).

It belongs to the KtrA potassium transport family. As to quaternary structure, homodimer, tetramer (dimer of homodimer) and octamer (tetramer of homodimer). Part of the KtrCD complex formed by an octameric catalytic ring of KtrC and a membrane associated dimer of KtrD forming a potassium channel.

It is found in the cell membrane. Its function is as follows. Catalytic subunit of the KtrCD potassium uptake transporter. The 2 major potassium transporter complexes KtrAB and KtrCD confer resistance to both suddenly imposed and prolonged osmotic stress. The chain is Ktr system potassium uptake protein C (ktrC) from Bacillus subtilis (strain 168).